Reading from the N-terminus, the 714-residue chain is ATP-dependent DNA helicase DinG (714 aa).

The region spanning 17-294 is the Helicase ATP-binding domain; it reads ALQDQIPDFI…TSMEQFRPKT (278 aa). 54–61 serves as a coordination point for ATP; sequence APTGVGKT. C120, C194, C199, and C205 together coordinate [4Fe-4S] cluster. The DEAH box motif lies at 248-251; it reads DEGH. The 182-residue stretch at 517–698 folds into the Helicase C-terminal domain; sequence HIAEMAAYFR…VFPIEQPAVP (182 aa).

Belongs to the helicase family. DinG subfamily. Type 1 sub-subfamily. Requires [4Fe-4S] cluster as cofactor.

The enzyme catalyses Couples ATP hydrolysis with the unwinding of duplex DNA at the replication fork by translocating in the 5'-3' direction. This creates two antiparallel DNA single strands (ssDNA). The leading ssDNA polymer is the template for DNA polymerase III holoenzyme which synthesizes a continuous strand.. It carries out the reaction ATP + H2O = ADP + phosphate + H(+). Its function is as follows. DNA-dependent ATPase and 5'-3' DNA helicase. Unwinds D-loops, R-loops, forked DNA and G-quadruplex DNA. This Salmonella choleraesuis (strain SC-B67) protein is ATP-dependent DNA helicase DinG.